Reading from the N-terminus, the 351-residue chain is Hydroxymethylglutaryl-CoA synthase (351 aa).

The active-site Proton donor/acceptor is the glutamate 80. Catalysis depends on cysteine 112, which acts as the Acyl-thioester intermediate. The (3S)-3-hydroxy-3-methylglutaryl-CoA site is built by cysteine 112 and serine 153. Arginine 199 contributes to the CoA binding site. Residues threonine 201 and histidine 234 each contribute to the (3S)-3-hydroxy-3-methylglutaryl-CoA site. Histidine 234 serves as the catalytic Proton donor/acceptor. Lysine 239 is a CoA binding site. (3S)-3-hydroxy-3-methylglutaryl-CoA is bound by residues arginine 243, asparagine 266, and serine 296.

It belongs to the thiolase-like superfamily. Archaeal HMG-CoA synthase family. As to quaternary structure, interacts with acetoacetyl-CoA thiolase that catalyzes the precedent step in the pathway and with a DUF35 protein. The acetoacetyl-CoA thiolase/HMG-CoA synthase complex channels the intermediate via a fused CoA-binding site, which allows for efficient coupling of the endergonic thiolase reaction with the exergonic HMGCS reaction.

The enzyme catalyses acetoacetyl-CoA + acetyl-CoA + H2O = (3S)-3-hydroxy-3-methylglutaryl-CoA + CoA + H(+). It functions in the pathway metabolic intermediate biosynthesis; (R)-mevalonate biosynthesis; (R)-mevalonate from acetyl-CoA: step 2/3. In terms of biological role, catalyzes the condensation of acetyl-CoA with acetoacetyl-CoA to form 3-hydroxy-3-methylglutaryl-CoA (HMG-CoA). Functions in the mevalonate (MVA) pathway leading to isopentenyl diphosphate (IPP), a key precursor for the biosynthesis of isoprenoid compounds that are building blocks of archaeal membrane lipids. The protein is Hydroxymethylglutaryl-CoA synthase of Thermoplasma acidophilum (strain ATCC 25905 / DSM 1728 / JCM 9062 / NBRC 15155 / AMRC-C165).